A 496-amino-acid polypeptide reads, in one-letter code: Protein TOO MANY MOUTHS (496 aa).

An N-terminal signal peptide occupies residues 1–23 (MARYEFFRQIFIVLSIVSPLVRS). Residues 24–473 (FTVITSDSTA…ATDVSSTSKS (450 aa)) lie on the Extracellular side of the membrane. LRR repeat units lie at residues 158–182 (GSSL…LGNL), 183–208 (TNLK…RFSG), 210–228 (RSLD…GFVL), 229–252 (PALS…LTSC), 254–276 (SLIK…INRL), 277–300 (NQLV…LQGL), 302–325 (SLQA…AFKG), 326–350 (LKNL…LTRL), 351–373 (NSLR…EFRD), and 375–401 (KHLS…VWRM). N-linked (GlcNAc...) asparagine glycans are attached at residues N181 and N196. An N-linked (GlcNAc...) asparagine glycan is attached at N362. A disordered region spans residues 438 to 464 (AETSRPAPSGTVQHLSREEDGALPDGA). The chain crosses the membrane as a helical span at residues 474-494 (LGFSYLSAFFLVFPNFIFMLI). The Cytoplasmic portion of the chain corresponds to 495 to 496 (SS).

It belongs to the RLP family. As to quaternary structure, forms heterodimer with ERECTA or ERL1 through their extracellular domains. Not able to form homodimer. Interacts with EPF2 but not with EPF1. Interacts with SERK1, SERK2, SERK3/BAK1 and SERK4. Interacts with EPFL9/STOMAGEN. In terms of tissue distribution, in epidermal cells of developing shoots and leaves, but not in roots. Expressed in the stomatal cell lineage in the developing epidermis. Accumulates strongly in meristemoid mother cells (MMC) and meristemoids, somewhat less in meristemoid sister cells (stomatal-lineage ground cells, SLGC), and is barely detected in pavement cells.

Its subcellular location is the cell membrane. Functionally, promotes cell fate progression in stomatal development. In leaves, needed to correctly orient spacing divisions, to limit the number of asymmetric divisions in neighbor cells, and to promote the asymmetric (amplifying) divisions of meristemoids. In stems, promotes the conversion of meristemoids into guard mother cells (GMC). Positively regulates CAPRICE (CPC) expression in differentiating stomaless-forming cell files. Forms constitutive complexes with ERECTA and ERL1 involved in the recognition of the stomatal regulatory peptides EPF1, EPF2 and EPFL9/STOMAGEN. Modulates the activity of the ligand-receptor pairs EPF2-ERECTA and EPF1-ERL1 in stomatal development. Functions in a combinatorial specific manner with the ERECTA-family (ERf) receptor kinases in the regulation of the immune response. The sequence is that of Protein TOO MANY MOUTHS from Arabidopsis thaliana (Mouse-ear cress).